Reading from the N-terminus, the 291-residue chain is Urease accessory protein UreD (291 aa).

It belongs to the UreD family. In terms of assembly, ureD, UreF and UreG form a complex that acts as a GTP-hydrolysis-dependent molecular chaperone, activating the urease apoprotein by helping to assemble the nickel containing metallocenter of UreC. The UreE protein probably delivers the nickel.

It is found in the cytoplasm. Functionally, required for maturation of urease via the functional incorporation of the urease nickel metallocenter. This Acinetobacter baumannii (strain ATCC 17978 / DSM 105126 / CIP 53.77 / LMG 1025 / NCDC KC755 / 5377) protein is Urease accessory protein UreD.